Here is a 446-residue protein sequence, read N- to C-terminus: tRNA modification GTPase MnmE (446 aa).

Arg24, Glu81, and Lys120 together coordinate (6S)-5-formyl-5,6,7,8-tetrahydrofolate. The 153-residue stretch at 216–368 (GLHAVLIGPP…LHTRLRELAL (153 aa)) folds into the TrmE-type G domain. Residue Asn226 participates in K(+) binding. Residues 226–231 (NAGKSS), 245–251 (TDVAGTT), and 270–273 (DTAG) each bind GTP. Ser230 provides a ligand contact to Mg(2+). Thr245, Val247, and Thr250 together coordinate K(+). Thr251 provides a ligand contact to Mg(2+). Lys446 is a binding site for (6S)-5-formyl-5,6,7,8-tetrahydrofolate.

This sequence belongs to the TRAFAC class TrmE-Era-EngA-EngB-Septin-like GTPase superfamily. TrmE GTPase family. In terms of assembly, homodimer. Heterotetramer of two MnmE and two MnmG subunits. K(+) serves as cofactor.

Its subcellular location is the cytoplasm. Functionally, exhibits a very high intrinsic GTPase hydrolysis rate. Involved in the addition of a carboxymethylaminomethyl (cmnm) group at the wobble position (U34) of certain tRNAs, forming tRNA-cmnm(5)s(2)U34. The sequence is that of tRNA modification GTPase MnmE from Xanthomonas campestris pv. campestris (strain 8004).